A 165-amino-acid polypeptide reads, in one-letter code: Alanine- and arginine-rich domain-containing protein (165 aa).

The tract at residues 136–165 (QQLKKRQDQERASKPQSPQDEEMNPECGNA) is disordered.

In Rattus norvegicus (Rat), this protein is Alanine- and arginine-rich domain-containing protein (Aard).